A 393-amino-acid polypeptide reads, in one-letter code: S-adenosylmethionine synthase (393 aa).

H17 lines the ATP pocket. D19 contributes to the Mg(2+) binding site. E45 is a binding site for K(+). L-methionine contacts are provided by E58 and Q106. Residues 106 to 116 form a flexible loop region; the sequence is QSAHIAQGVDA. Residues 171–173, D246, 252–253, A269, and K273 each bind ATP; these read DAK and RK. D246 provides a ligand contact to L-methionine. K277 contacts L-methionine.

It belongs to the AdoMet synthase family. Homotetramer; dimer of dimers. Mg(2+) serves as cofactor. It depends on K(+) as a cofactor.

The protein resides in the cytoplasm. It carries out the reaction L-methionine + ATP + H2O = S-adenosyl-L-methionine + phosphate + diphosphate. Its pathway is amino-acid biosynthesis; S-adenosyl-L-methionine biosynthesis; S-adenosyl-L-methionine from L-methionine: step 1/1. In terms of biological role, catalyzes the formation of S-adenosylmethionine (AdoMet) from methionine and ATP. The overall synthetic reaction is composed of two sequential steps, AdoMet formation and the subsequent tripolyphosphate hydrolysis which occurs prior to release of AdoMet from the enzyme. The polypeptide is S-adenosylmethionine synthase (Roseobacter denitrificans (strain ATCC 33942 / OCh 114) (Erythrobacter sp. (strain OCh 114))).